The chain runs to 300 residues: ATP synthase gamma chain (300 aa).

Belongs to the ATPase gamma chain family. As to quaternary structure, F-type ATPases have 2 components, CF(1) - the catalytic core - and CF(0) - the membrane proton channel. CF(1) has five subunits: alpha(3), beta(3), gamma(1), delta(1), epsilon(1). CF(0) has three main subunits: a, b and c.

The protein localises to the cell membrane. In terms of biological role, produces ATP from ADP in the presence of a proton gradient across the membrane. The gamma chain is believed to be important in regulating ATPase activity and the flow of protons through the CF(0) complex. The sequence is that of ATP synthase gamma chain from Enterococcus hirae (strain ATCC 9790 / DSM 20160 / JCM 8729 / LMG 6399 / NBRC 3181 / NCIMB 6459 / NCDO 1258 / NCTC 12367 / WDCM 00089 / R).